Consider the following 344-residue polypeptide: Aurora kinase B (344 aa).

The tract at residues methionine 1–serine 22 is disordered. Position 35 is a phosphothreonine (threonine 35). Serine 62 is modified (phosphoserine). Threonine 64 is subject to Phosphothreonine. The 251-residue stretch at phenylalanine 77–valine 327 folds into the Protein kinase domain. Residues leucine 83–valine 91 and lysine 106 contribute to the ATP site. Residue aspartate 200 is the Proton acceptor of the active site. Residue lysine 215 is modified to N6-acetyllysine. Position 227 is a phosphoserine (serine 227). Phosphothreonine; by autocatalysis is present on threonine 232.

The protein belongs to the protein kinase superfamily. Ser/Thr protein kinase family. Aurora subfamily. In terms of assembly, component of the chromosomal passenger complex (CPC) composed of at least BIRC5/survivin, CDCA8/borealin, INCENP, AURKB or AURKC; predominantly independent AURKB- and AURKC-containing complexes exist. Associates with RACGAP1 during M phase. Interacts with SPDYC; this interaction may be required for proper localization of active, Thr-232-phosphorylated AURKB form during prometaphase and metaphase. Interacts with p53/TP53. Interacts (via the middle kinase domain) with NOC2L (via the N- and C-terminus domains). Interacts with CDCA1. Interacts with EVI5. Interacts with JTB. Interacts with NDC80. Interacts with PSMA3. Interacts with RNF2/RING1B. Interacts with SEPTIN1. Interacts with SIRT2. Interacts with TACC1. Interacts with TTC28. The phosphorylation of Thr-232 requires the binding to INCENP and occurs by means of an autophosphorylation mechanism. Thr-232 phosphorylation is indispensable for the AURKB kinase activity. In terms of processing, acetylated at Lys-215 by KAT5 at kinetochores, increasing AURKB activity and promoting accurate chromosome segregation in mitosis. Post-translationally, ubiquitinated by different BCR (BTB-CUL3-RBX1) E3 ubiquitin ligase complexes. Ubiquitinated by the BCR(KLHL9-KLHL13) E3 ubiquitin ligase complex, ubiquitination leads to removal from mitotic chromosomes and is required for cytokinesis. During anaphase, the BCR(KLHL21) E3 ubiquitin ligase complex recruits the CPC complex from chromosomes to the spindle midzone and mediates the ubiquitination of AURKB. Ubiquitination of AURKB by BCR(KLHL21) E3 ubiquitin ligase complex may not lead to its degradation by the proteasome. Deubiquitinated by USP35; inhibiting CDH1-mediated degradation of AURKB. High level expression seen in the thymus. It is also expressed in the spleen, lung, testis, colon, placenta and fetal liver. Expressed during S and G2/M phase and expression is up-regulated in cancer cells during M phase. In terms of tissue distribution, not expressed in normal liver, high expression in metastatic liver.

The protein localises to the nucleus. It localises to the chromosome. The protein resides in the centromere. It is found in the kinetochore. Its subcellular location is the cytoplasm. The protein localises to the cytoskeleton. It localises to the spindle. The protein resides in the midbody. It carries out the reaction L-seryl-[protein] + ATP = O-phospho-L-seryl-[protein] + ADP + H(+). The enzyme catalyses L-threonyl-[protein] + ATP = O-phospho-L-threonyl-[protein] + ADP + H(+). With respect to regulation, activity is greatly increased when AURKB is within the CPC complex. In particular, AURKB-phosphorylated INCENP acts as an activator of AURKB. Positive feedback between HASPIN and AURKB contributes to CPC localization. Inhibited by ZM447439. Functionally, serine/threonine-protein kinase component of the chromosomal passenger complex (CPC), a complex that acts as a key regulator of mitosis. The CPC complex has essential functions at the centromere in ensuring correct chromosome alignment and segregation and is required for chromatin-induced microtubule stabilization and spindle assembly. Involved in the bipolar attachment of spindle microtubules to kinetochores and is a key regulator for the onset of cytokinesis during mitosis. Required for central/midzone spindle assembly and cleavage furrow formation. Key component of the cytokinesis checkpoint, a process required to delay abscission to prevent both premature resolution of intercellular chromosome bridges and accumulation of DNA damage: phosphorylates CHMP4C, leading to retain abscission-competent VPS4 (VPS4A and/or VPS4B) at the midbody ring until abscission checkpoint signaling is terminated at late cytokinesis. AURKB phosphorylates the CPC complex subunits BIRC5/survivin, CDCA8/borealin and INCENP. Phosphorylation of INCENP leads to increased AURKB activity. Other known AURKB substrates involved in centromeric functions and mitosis are CENPA, DES/desmin, GPAF, KIF2C, NSUN2, RACGAP1, SEPTIN1, VIM/vimentin, HASPIN, and histone H3. A positive feedback loop involving HASPIN and AURKB contributes to localization of CPC to centromeres. Phosphorylation of VIM controls vimentin filament segregation in cytokinetic process, whereas histone H3 is phosphorylated at 'Ser-10' and 'Ser-28' during mitosis (H3S10ph and H3S28ph, respectively). AURKB is also required for kinetochore localization of BUB1 and SGO1. Phosphorylation of p53/TP53 negatively regulates its transcriptional activity. Key regulator of active promoters in resting B- and T-lymphocytes: acts by mediating phosphorylation of H3S28ph at active promoters in resting B-cells, inhibiting RNF2/RING1B-mediated ubiquitination of histone H2A and enhancing binding and activity of the USP16 deubiquitinase at transcribed genes. Acts as an inhibitor of CGAS during mitosis: catalyzes phosphorylation of the N-terminus of CGAS during the G2-M transition, blocking CGAS liquid phase separation and activation, and thereby preventing CGAS-induced autoimmunity. Phosphorylates KRT5 during anaphase and telophase. Phosphorylates ATXN10 which promotes phosphorylation of ATXN10 by PLK1 and may play a role in the regulation of cytokinesis and stimulating the proteasomal degradation of ATXN10. The protein is Aurora kinase B (AURKB) of Homo sapiens (Human).